The following is a 490-amino-acid chain: GTPase Der (490 aa).

2 EngA-type G domains span residues 1 to 165 and 227 to 400; these read MRIA…QIPV and LKVA…TIAT. Residues 7–14, 54–58, 117–120, 233–240, 280–284, and 345–348 each bind GTP; these read GRPNVGKS, DTGGV, NKAD, GHPNVGKS, DTAGL, and NKWD. The KH-like domain maps to 401-485; the sequence is TKLSTSLVNK…PFDLEYKAKP (85 aa).

Belongs to the TRAFAC class TrmE-Era-EngA-EngB-Septin-like GTPase superfamily. EngA (Der) GTPase family. As to quaternary structure, associates with the 50S ribosomal subunit.

In terms of biological role, GTPase that plays an essential role in the late steps of ribosome biogenesis. This chain is GTPase Der, found in Chlamydia trachomatis serovar A (strain ATCC VR-571B / DSM 19440 / HAR-13).